Reading from the N-terminus, the 79-residue chain is Sigma-O factor regulatory protein RsoA (79 aa).

In terms of biological role, together with RNA polymerase sigma factor SigO, positively regulates the expression of at least three operons, including oxdC-yvrL, sigO-rsoA and yvrJ. Required for the acid stress-dependent induction of the oxalate decarboxylase oxdC. The sequence is that of Sigma-O factor regulatory protein RsoA (rsoA) from Bacillus subtilis (strain 168).